The sequence spans 288 residues: Ninja-family protein 6 (288 aa).

Disordered regions lie at residues 1–50 (MASR…KRPR) and 66–207 (LHAD…TRTG). Gly residues predominate over residues 12–23 (AGEGAGPPGDAG). A compositionally biased stretch (low complexity) spans 76 to 86 (LPLLRTTSLPT). A compositionally biased stretch (basic and acidic residues) spans 91 to 103 (ERWRRREMQSRRR). Positions 131–173 (RRSNASQGSNSASTTEQGIGGSMFNQSADAKSPSTSDNRNQND) are enriched in polar residues. Positions 195–207 (RLRTLGSLTTRTG) are enriched in low complexity.

Belongs to the Ninja family.

It is found in the nucleus. The sequence is that of Ninja-family protein 6 from Zea mays (Maize).